A 128-amino-acid polypeptide reads, in one-letter code: MLVFSFLFVVVSINLNALIFLCKKSWASYLFLYLYNFFFCEDEYKLTKNCVRVEAIAPFMMCLGSLGAILGKQRTANFLLLSYNVINNPVVLVYYVENFSRINFIKHTTKEKSVIWTNERQLNPWICN.

Helical transmembrane passes span 1–21 (MLVF…LIFL), 51–71 (VRVE…AILG), and 76–96 (ANFL…VYYV).

Its subcellular location is the membrane. This is an uncharacterized protein from Saccharomyces cerevisiae (strain ATCC 204508 / S288c) (Baker's yeast).